Reading from the N-terminus, the 189-residue chain is UPF0301 protein CTLon_0458 (189 aa).

It belongs to the UPF0301 (AlgH) family.

The polypeptide is UPF0301 protein CTLon_0458 (Chlamydia trachomatis serovar L2b (strain UCH-1/proctitis)).